The chain runs to 301 residues: Probable alpha-L-glutamate ligase (301 aa).

The ATP-grasp domain maps to 104 to 287; that stretch reads LQLLSRRGVG…VAGLIIQYLE (184 aa). Residues K141, 178–179, D187, and 211–213 each bind ATP; these read EY and RSN. Positions 248, 260, and 262 each coordinate Mg(2+). The Mn(2+) site is built by D248, E260, and N262.

This sequence belongs to the RimK family. Mg(2+) serves as cofactor. It depends on Mn(2+) as a cofactor.

In Stutzerimonas stutzeri (strain A1501) (Pseudomonas stutzeri), this protein is Probable alpha-L-glutamate ligase.